A 422-amino-acid chain; its full sequence is Inner membrane ALBINO3-like protein 2, chloroplastic (422 aa).

A compositionally biased stretch (polar residues) spans 1 to 10; that stretch reads MALQMKQSPS. The segment at 1 to 22 is disordered; sequence MALQMKQSPSMGVRRASQPVLP. Residues 65 to 85 form a helical membrane-spanning segment; it reads LYTLAEGGPIDVLAQFFEFVL. Residues 86-96 lie on the Stromal side of the membrane; it reads QTLDEGLESAK. Residues 97–117 form a helical membrane-spanning segment; the sequence is IPYSYGFAIIALTVLVKVATF. Topologically, residues 118–166 are lumenal; the sequence is PLTQKQVESTLSLQALQPRVKELQAKYADDPENLQLETARLYKEAGVNP. Residues 167–187 traverse the membrane as a helical segment; the sequence is LAGCFPTLATIPVFIGLYNAL. Topologically, residues 188-225 are stromal; the sequence is SNAAKEGLLTEGFFWIPSLGGPTTIGGGLEWLVPFENG. Residues 226–246 form a helical membrane-spanning segment; sequence APPVGWANAAAYLVMPVLLVA. The Lumenal portion of the chain corresponds to 247–275; sequence SQYASQKIISSQNNQDPSQQQAQAILKFL. A helical transmembrane segment spans residues 276 to 296; that stretch reads PLMIGWFSLNVPSGLTLYWFV. Residues 297 to 422 lie on the Stromal side of the membrane; sequence NNLLSTGQQL…GSEEGKDNSA (126 aa). The tract at residues 325–422 is disordered; sequence TAGSSTPIVK…GSEEGKDNSA (98 aa). The span at 334-350 shows a compositional bias: basic and acidic residues; the sequence is KPKEERVKKVTGKELGS. Positions 358 to 367 are enriched in acidic residues; it reads DGEEVEDVEV. Low complexity predominate over residues 368 to 380; sequence EVVSSGSSSSSGS. The span at 386-400 shows a compositional bias: basic and acidic residues; sequence RKGEKFRALKAREAA.

Belongs to the OXA1/ALB3/YidC (TC 2.A.9.2) family.

It is found in the plastid. The protein resides in the chloroplast thylakoid membrane. In terms of biological role, required for the insertion of some light-harvesting complexes (LHC) proteins into the chloroplast thylakoid membrane. Essential for the assembly and activity of LHC I and II. Its function is probably partly distinct from that of ALB3.1. The sequence is that of Inner membrane ALBINO3-like protein 2, chloroplastic (ALB3.2) from Chlamydomonas reinhardtii (Chlamydomonas smithii).